A 120-amino-acid polypeptide reads, in one-letter code: Large ribosomal subunit protein bL21 (120 aa).

Belongs to the bacterial ribosomal protein bL21 family. Part of the 50S ribosomal subunit. Contacts protein L20.

This protein binds to 23S rRNA in the presence of protein L20. This is Large ribosomal subunit protein bL21 from Roseiflexus sp. (strain RS-1).